Here is a 485-residue protein sequence, read N- to C-terminus: Glutamyl-tRNA(Gln) amidotransferase subunit A (485 aa).

Catalysis depends on charge relay system residues lysine 79 and serine 154. The active-site Acyl-ester intermediate is serine 178.

Belongs to the amidase family. GatA subfamily. In terms of assembly, heterotrimer of A, B and C subunits.

The catalysed reaction is L-glutamyl-tRNA(Gln) + L-glutamine + ATP + H2O = L-glutaminyl-tRNA(Gln) + L-glutamate + ADP + phosphate + H(+). Functionally, allows the formation of correctly charged Gln-tRNA(Gln) through the transamidation of misacylated Glu-tRNA(Gln) in organisms which lack glutaminyl-tRNA synthetase. The reaction takes place in the presence of glutamine and ATP through an activated gamma-phospho-Glu-tRNA(Gln). This chain is Glutamyl-tRNA(Gln) amidotransferase subunit A, found in Bacillus pumilus (strain SAFR-032).